The following is a 307-amino-acid chain: Delta-9 acyl-lipid desaturase 2 (307 aa).

Polar residues predominate over residues 1–17 (MSVTSTVEENHQKNPST). A disordered region spans residues 1–21 (MSVTSTVEENHQKNPSTPAAV). Residues 53–73 (LALLAPFYFTWSALWVTFLFY) form a helical membrane-spanning segment. Fe cation is bound by residues histidine 85 and histidine 90. The short motif at 85–90 (HRNLAH) is the Histidine box-1 element. Residues 99–119 (LEYLLAYCALLAIQGDPIDWV) form a helical membrane-spanning segment. Fe cation is bound by residues histidine 122, histidine 125, and histidine 126. The short motif at 122–126 (HRYHH) is the Histidine box-2 element. 2 consecutive transmembrane segments (helical) span residues 182–202 (VLFHILGLGFFLFYLGGMSFV) and 204–224 (WGMGVGAALEVHVTCLINSLC). 4 residues coordinate Fe cation: histidine 225, histidine 254, histidine 257, and histidine 258. Positions 254 to 258 (HNNHH) match the Histidine box-3 motif.

It belongs to the fatty acid desaturase type 1 family. Requires Fe cation as cofactor. Strongly expressed in flowers, roots, leaves, seedpods, and inflorescence meristems.

Its subcellular location is the endoplasmic reticulum membrane. The enzyme catalyses a 1-hexacosanoyl-2-acyl-phosphoglycerolipid + 2 Fe(II)-[cytochrome b5] + O2 + 2 H(+) = a 1-[(17Z)-hexacos-17-enoyl]-2-acyl-phosphoglycerolipid + 2 Fe(III)-[cytochrome b5] + 2 H2O. It carries out the reaction a 1-tetracosanoyl-2-acyl-phosphoglycerolipid + 2 Fe(II)-[cytochrome b5] + O2 + 2 H(+) = a 1-[(15Z)-tetracos-15-enoyl]-2-acyl-phosphoglycerolipid + 2 Fe(III)-[cytochrome b5] + 2 H2O. The protein operates within lipid metabolism; polyunsaturated fatty acid biosynthesis. Involved in delta-9 desaturation of fatty acids. Plays a role in the production of very-long-chain monounsaturated fatty acids (VLCMUFAs) in seed lipids and in membrane phospholipids and sphingolipids. Acts as C-16:0 desaturase for monogalactosyl diacylglycerol (MGDG) and phosphatidylglycerol (PG). Is an essential component for cold adaptation. Is essential to adjust the acyl composition of organelle membrane lipid composition in response to cold stress. The protein is Delta-9 acyl-lipid desaturase 2 of Arabidopsis thaliana (Mouse-ear cress).